A 347-amino-acid chain; its full sequence is uncharacterized protein (347 aa).

The signal sequence occupies residues 1-21; that stretch reads MNKKSLNIVVMFGILMILAFS.

It belongs to the bacterial solute-binding protein 1 family. WtpA subfamily.

This is an uncharacterized protein from Methanococcus maripaludis (strain C5 / ATCC BAA-1333).